We begin with the raw amino-acid sequence, 112 residues long: 2Fe-2S ferredoxin (112 aa).

The 2Fe-2S ferredoxin-type domain occupies 5–107 (IKVTFIINDG…GIKVHLPAAT (103 aa)). [2Fe-2S] cluster is bound by residues cysteine 42, cysteine 48, cysteine 51, and cysteine 88.

It belongs to the adrenodoxin/putidaredoxin family. The cofactor is [2Fe-2S] cluster.

Ferredoxin are iron-sulfur proteins that transfer electrons in a wide variety of metabolic reactions. This is 2Fe-2S ferredoxin (fdxB) from Rickettsia rickettsii.